Reading from the N-terminus, the 463-residue chain is Protein translocase subunit SecY (463 aa).

Topologically, residues 1-20 (MGFMDFLAKMGENLPAVSKP) are cytoplasmic. A helical membrane pass occupies residues 21 to 47 (KDKPTLTRKLLWTFIGLIVYLLMASIP). The Extracellular portion of the chain corresponds to 48-60 (LYGVTSSNSFLSN). Positions 61-68 (FLAQQIIF) form an intramembrane region, helical. The discontinuously helical transmembrane segment at 61–89 (FLAQQIIFASSQGTLAQLGIGPVITSGLI) threads the bilayer. The stretch at 69–80 (ASSQGTLAQLGI) is an intramembrane region. The segment at residues 81–89 (GPVITSGLI) is an intramembrane region (helical). The Cytoplasmic portion of the chain corresponds to 90 to 110 (MQILVGSKLINVDLTTQEGKS). A helical transmembrane segment spans residues 111 to 134 (KFTQAEKALALIFIIVESSLFGYV). The Extracellular portion of the chain corresponds to 135–142 (FTRATSNI). Residues 143 to 167 (LLPIIVVVQLIIASYIILLLDEMIQ) form a helical membrane-spanning segment. At 168–174 (KGWGLGS) the chain is on the cytoplasmic side. A helical membrane pass occupies residues 175 to 193 (GVSLFIMAGIMKVIFWNMF). At 194-236 (GIVSVQSQNLPVGFFPLLVSYITSGRNLQEIVLNTSSTTPYQP) the chain is on the extracellular side. A helical transmembrane segment spans residues 237 to 258 (DLIGLIATVGLTILIVYLVNTN). The Cytoplasmic portion of the chain corresponds to 259–283 (IYIPVTTQRLRGIRTTVPLNFLYVS). The chain crosses the membrane as a helical span at residues 284–305 (SIPVIFVSVLGADIQLFASLAN). The Extracellular segment spans residues 306 to 341 (SISNSASGILTDIANAFFFPPQGVPHSVYALVVDPV). A helical transmembrane segment spans residues 342 to 361 (GAAIYAAVFIVLSIVFGMLW). The Cytoplasmic segment spans residues 362–404 (IDVAGLDPKTQAEQMIRSGIEIPGMRTNPRIIEGILSKYIYAL). A helical membrane pass occupies residues 405-423 (GFFSSLIVGLIAVVATFLG). Residues 424–426 (TYG) lie on the Extracellular side of the membrane. A helical transmembrane segment spans residues 427-441 (TGVGLLLAITIAMQY). At 442–463 (YNLLAYERTLEMYPLLKRIVGE) the chain is on the cytoplasmic side.

Belongs to the SecY/SEC61-alpha family. As to quaternary structure, component of the Sec protein translocase complex. Heterotrimer consisting of alpha (SecY), beta (SecG) and gamma (SecE) subunits. The heterotrimers can form oligomers, although 1 heterotrimer is thought to be able to translocate proteins. Interacts with the ribosome. May interact with SecDF, and other proteins may be involved.

Its subcellular location is the cell membrane. In terms of biological role, the central subunit of the protein translocation channel SecYEG. Consists of two halves formed by TMs 1-5 and 6-10. These two domains form a lateral gate at the front which open onto the bilayer between TMs 2 and 7, and are clamped together by SecE at the back. The channel is closed by both a pore ring composed of hydrophobic SecY resides and a short helix (helix 2A) on the extracellular side of the membrane which forms a plug. The plug probably moves laterally to allow the channel to open. The ring and the pore may move independently. This is Protein translocase subunit SecY from Sulfolobus acidocaldarius (strain ATCC 33909 / DSM 639 / JCM 8929 / NBRC 15157 / NCIMB 11770).